A 648-amino-acid polypeptide reads, in one-letter code: p-hydroxybenzoic acid efflux pump subunit AaeB (648 aa).

Helical transmembrane passes span 11–31 (FACKLTLAIVLSLLLGFYFGL), 41–61 (AALVAAGPAFAAGGEPFAGAI), 65–87 (GWLRIIGTVLGSLCALLLMMLLI), 91–110 (LLMILLCCLWAGVCTWLSSL), 125–145 (TALIIVVSCLGEPQFILQLAL), 150–170 (EIVLGIACAVLADTLLAPRSV), 369–389 (LFWLWSGWNAGSGCMIMIAVV), 406–426 (FLMGSLVALPVGALYYTVILP), 430–450 (QSLVLLCLSLGALTFICGMEV), 455–474 (LGSLGTLASTLNILVLSNPM), and 481–501 (FVDSAIGQVIGCLLALVVLLA).

It belongs to the aromatic acid exporter ArAE (TC 2.A.85) family.

The protein resides in the cell inner membrane. Forms an efflux pump with AaeA. Could function as a metabolic relief valve, allowing to eliminate certain compounds when they accumulate to high levels in the cell. The sequence is that of p-hydroxybenzoic acid efflux pump subunit AaeB (aaeB) from Edwardsiella tarda (strain FL6-60).